The primary structure comprises 769 residues: MAASAGCYYGVLGCALSLLLLPPLSRCAARTDSPLPEELPLILGFRLERSDRHAALSPDGELEVVEGSRLELRVYGLHLREDSGHILAFTEYSPGSQDNRSCLEDSRDLVLTRLNVSDDGFGAAGAAIVRLDVLPLRKSQSSRVYVLCTSRGPGLPWKLHTGPDGRLRVLEEEKPLLPIWLQACIIAVLLTLSGIFSGLNLGLMALDPMELRVVQRCGTEKEKRYASKIEPVRRKGNYLLCSLLLGNVLVNTTLTALLDELIGSGLAAVLASTTGIVVLGEIVPQALCSRHGLAVGANTLWLTRIFMLLTFPVAYPVSRLLDCALGQEIGTVYNREKLLEMLKVTEPYSGIVREEMNIIQGALELRTKTVEDVMTKVEDCFMLPSDAVLDFNTMSSIMESGYTRIPVYENERSNIVDILYVKDLAFVDPDDCTPLSTITRFYSHPLHFVFSDTKLDAVLEEFKKGKSHLAIVQKVNSEGEGDPFYEVMGLVTLEDVIEEIIKSEILDESDLYTDNRSKKRVKRRQDRKDFSVFKDADNELRVKISPQLLLAAHRFLSTEVPLFAPALVSEKTLLRLLKYPDVVQELHFNEDDKKASENFLYQRSKIADYFILILQGKVEVEAGKENMKFESGAFSYYGVMAINTPSAAELRSPSHMSSLNRSISLSCHERSDSISSTISGSNTQLSAQAQYMADFSVRALGDLQFVKITREQYQGALMSSRLDSSPQSPEGGTRKPDSTLSERSEVLEDETTSLLNQRNSQHSLQHNAV.

Topologically, residues 1–175 (MAASAGCYYG…RLRVLEEEKP (175 aa)) are extracellular. N-linked (GlcNAc...) asparagine glycosylation is found at Asn-99 and Asn-115. Residues 175 to 355 (PLLPIWLQAC…EPYSGIVREE (181 aa)) form the CNNM transmembrane domain. A helical transmembrane segment spans residues 176–196 (LLPIWLQACIIAVLLTLSGIF). Over 197 to 237 (SGLNLGLMALDPMELRVVQRCGTEKEKRYASKIEPVRRKGN) the chain is Cytoplasmic. The segment at residues 238–258 (YLLCSLLLGNVLVNTTLTALL) is an intramembrane region (helical). Residues 259–261 (DEL) lie on the Cytoplasmic side of the membrane. The chain crosses the membrane as a helical span at residues 262–282 (IGSGLAAVLASTTGIVVLGEI). The Extracellular portion of the chain corresponds to 283–292 (VPQALCSRHG). Residues 293 to 313 (LAVGANTLWLTRIFMLLTFPV) traverse the membrane as a helical segment. Residues 314–769 (AYPVSRLLDC…SQHSLQHNAV (456 aa)) lie on the Cytoplasmic side of the membrane. 2 consecutive CBS domains span residues 374-435 (MTKV…CTPL) and 442-508 (YSHP…ILDE). The segment at 717–769 (LMSSRLDSSPQSPEGGTRKPDSTLSERSEVLEDETTSLLNQRNSQHSLQHNAV) is disordered. Over residues 721–730 (RLDSSPQSPE) the composition is skewed to polar residues. Over residues 732–746 (GTRKPDSTLSERSEV) the composition is skewed to basic and acidic residues. Residues 752-769 (TSLLNQRNSQHSLQHNAV) show a composition bias toward polar residues.

It belongs to the ACDP family.

It is found in the cell membrane. Probable metal transporter. This Xenopus tropicalis (Western clawed frog) protein is Metal transporter CNNM4 (cnnm4).